Here is a 190-residue protein sequence, read N- to C-terminus: dCTP deaminase, dUMP-forming (190 aa).

DCTP-binding positions include 101-106 (KSSLGR), aspartate 119, 127-129 (TLE), glutamine 148, tyrosine 162, and glutamine 174. Glutamate 129 serves as the catalytic Proton donor/acceptor. A disordered region spans residues 162 to 190 (YGSASAGSKYQGQRGPTPSRSYENFIKNT). Polar residues predominate over residues 166 to 190 (SAGSKYQGQRGPTPSRSYENFIKNT).

The protein belongs to the dCTP deaminase family. As to quaternary structure, homotrimer.

The enzyme catalyses dCTP + 2 H2O = dUMP + NH4(+) + diphosphate. It functions in the pathway pyrimidine metabolism; dUMP biosynthesis; dUMP from dCTP: step 1/1. Bifunctional enzyme that catalyzes both the deamination of dCTP to dUTP and the hydrolysis of dUTP to dUMP without releasing the toxic dUTP intermediate. In Mycobacterium leprae (strain Br4923), this protein is dCTP deaminase, dUMP-forming.